We begin with the raw amino-acid sequence, 238 residues long: CD63 antigen (238 aa).

The Cytoplasmic segment spans residues 2–11 (AVEGGMKCVK). Residues 12–32 (FLLYVLLLAFCACAVGLIAIG) form a helical membrane-spanning segment. The Extracellular segment spans residues 33 to 51 (VAVQVVLKQAITHETTAGS). A helical membrane pass occupies residues 52–72 (LLPVVIIAVGAFLFLVAFVGC). Over 73-81 (CGACKENYC) the chain is Cytoplasmic. Residues 82–102 (LMITFAIFLSLIMLVEVAVAI) traverse the membrane as a helical segment. Over 103–203 (AGYVFRDQVK…TIAAWLRKNV (101 aa)) the chain is Extracellular. N-linked (GlcNAc...) asparagine glycosylation is found at asparagine 130, asparagine 150, and asparagine 172. The helical transmembrane segment at 204 to 224 (LLVAGAALGIAFVEVLGIIFS) threads the bilayer. The Cytoplasmic portion of the chain corresponds to 225–238 (CCLVKSIRSGYEVM). The short motif at 234–238 (GYEVM) is the Lysosomal targeting motif element.

Belongs to the tetraspanin (TM4SF) family. In terms of assembly, interacts with TIMP1 and ITGB1 and recruits TIMP1 to ITGB1. Interacts with CD9. Identified in a complex with CD9 and ITGB3. Interacts with PMEL. Interacts with KDR/VEGFR2; identified in a complex with ITGB1 and KDR/VEGFR2 and is required to recruit KDR to ITGB1 complexes. Interacts with SYT7. In terms of processing, palmitoylated at a low, basal level in unstimulated platelets. The level of palmitoylation increases when platelets are activated by thrombin (in vitro). As to expression, detected in mast cells and platelets (at protein level).

Its subcellular location is the cell membrane. It is found in the lysosome membrane. It localises to the late endosome membrane. The protein resides in the endosome. The protein localises to the multivesicular body. Its subcellular location is the melanosome. It is found in the secreted. It localises to the extracellular exosome. The protein resides in the cell surface. Functions as a cell surface receptor for TIMP1 and plays a role in the activation of cellular signaling cascades. Plays a role in the activation of ITGB1 and integrin signaling, leading to the activation of AKT, FAK/PTK2 and MAP kinases. Promotes cell survival, reorganization of the actin cytoskeleton, cell adhesion, spreading and migration, via its role in the activation of AKT and FAK/PTK2. Plays a role in VEGFA signaling via its role in regulating the internalization of KDR/VEGFR2. Plays a role in intracellular vesicular transport processes, and is required for normal trafficking of the PMEL luminal domain that is essential for the development and maturation of melanocytes. Plays a role in the adhesion of leukocytes onto endothelial cells via its role in the regulation of SELP trafficking. May play a role in mast cell degranulation in response to Ms4a2/FceRI stimulation, but not in mast cell degranulation in response to other stimuli. The chain is CD63 antigen (Cd63) from Rattus norvegicus (Rat).